The following is a 381-amino-acid chain: DNA replication and repair protein RecF (381 aa).

30–37 lines the ATP pocket; sequence GENAQGKT.

It belongs to the RecF family.

It is found in the cytoplasm. In terms of biological role, the RecF protein is involved in DNA metabolism; it is required for DNA replication and normal SOS inducibility. RecF binds preferentially to single-stranded, linear DNA. It also seems to bind ATP. This chain is DNA replication and repair protein RecF, found in Lactobacillus delbrueckii subsp. bulgaricus (strain ATCC BAA-365 / Lb-18).